A 380-amino-acid chain; its full sequence is M-protease (380 aa).

A signal peptide spans 1–27 (MKKPLGKIVASTALLISVAFSSSIASA). Positions 28–111 (AEEAKEKYLI…IEEDAEVTTM (84 aa)) are excised as a propeptide. An Inhibitor I9 domain is found at 34–111 (KYLIGFNEQE…IEEDAEVTTM (78 aa)). Gln113 is a Ca(2+) binding site. The 264-residue stretch at 116-379 (PWGISRVQAP…SGLVNAEAAT (264 aa)) folds into the Peptidase S8 domain. Asp143 functions as the Charge relay system in the catalytic mechanism. Residue Asp151 coordinates Ca(2+). Catalysis depends on His173, which acts as the Charge relay system. Residues Leu184, Asn186, Ile188, Val190, Ala274, Tyr276, Ala279, and Asp302 each coordinate Ca(2+). Ser326 serves as the catalytic Charge relay system.

The protein belongs to the peptidase S8 family. Monomer. Ca(2+) serves as cofactor.

Its subcellular location is the secreted. Activity is inhibited by phenylmethylsulfonyl fluoride and chymostatin. Its function is as follows. Alkaline serine protease that cleaves various substrates, including N-succinyl-Ala-Ala-Pro-Phe-pNA, N-succinyl-Ala-Ala-Pro-MetpNA, oxidized insulin B chain, casein, hemoglobin and scleroproteins, such as keratin, alpha-keratin and elastin. The polypeptide is M-protease (aprE) (Shouchella clausii (strain KSM-K16) (Alkalihalobacillus clausii)).